The primary structure comprises 69 residues: MANNKSSNNNELLVYGAEQAIDQMKYEIASEFGVNLGADTTARANGSVGGEITKRLVQLAEQQLGGGRF.

Belongs to the alpha/beta-type SASP family.

SASP are bound to spore DNA. They are double-stranded DNA-binding proteins that cause DNA to change to an a-like conformation. They protect the DNA backbone from chemical and enzymatic cleavage and are thus involved in dormant spore's high resistance to UV light. The sequence is that of Small, acid-soluble spore protein C4 (SASP-C4) from Priestia megaterium (Bacillus megaterium).